The sequence spans 634 residues: Biosynthetic arginine decarboxylase (634 aa).

Lysine 103 is subject to N6-(pyridoxal phosphate)lysine. 283-293 (FDVGGGLGVDY) provides a ligand contact to substrate.

The protein belongs to the Orn/Lys/Arg decarboxylase class-II family. SpeA subfamily. Requires Mg(2+) as cofactor. The cofactor is pyridoxal 5'-phosphate.

It carries out the reaction L-arginine + H(+) = agmatine + CO2. The protein operates within amine and polyamine biosynthesis; agmatine biosynthesis; agmatine from L-arginine: step 1/1. In terms of biological role, catalyzes the biosynthesis of agmatine from arginine. In Photorhabdus laumondii subsp. laumondii (strain DSM 15139 / CIP 105565 / TT01) (Photorhabdus luminescens subsp. laumondii), this protein is Biosynthetic arginine decarboxylase.